A 440-amino-acid polypeptide reads, in one-letter code: MAFALPSSLVSICDKSFIKPSSLTPSTLRFHKLSFIDQSLSNMYIPCAFFYPKVQQRLEDSKNSDELSHIAHLLQTSLSQTLVSYYPYAGKLKDNATVDCNDMGAEFLSVRIKCSMSEILDHPHASLAESIVLPKDLPWANNCEGGNLLVVQVSKFDCGGIAISVCFSHKIGDGCSLLNFLNDWSSVTRDHTTTTLVPSPRFVGDSVFSTKKYGSLITPQILSDLNECVQKRLIFPTDKLDALRAKVAEESGVKNPTRAEVVSALLFKCATKASSSMLPSKLVHFLNIRTMIKPRLPRNAIGNLSSIFSIEATNMQDMELPTLVRNLRKEVEVAYKKDQVEQNELILEVVESMREGKLPFENMDGYENVYTCSNLCKYPYYTVDFGWGRPERVCLGNGPSKNAFFLKDYKAGQGVEARVMLHKQQMSEFERNEELLEFIA.

Catalysis depends on proton acceptor residues His-169 and Asp-384.

Belongs to the plant acyltransferase family.

It carries out the reaction vanillylamine + (6E)-8-methylnon-6-enoyl-CoA = capsaicin + CoA + H(+). The enzyme catalyses (6E)-8-methylnon-6-enoyl-CoA + 4-hydroxy-3-methoxy-benzenemethanol = capsiate + CoA. Its function is as follows. Involved in the biosynthesis of capsaicinoids and capsinoids natural products, pungent alkaloids synthesized from phenylpropanoid intermediates in the placental tissue of chili pepper fruit acting as repellant on herbivorous mammals and conferring spiciness to hot peppers. Catalyzes the biosynthesis of capsaicin, a pungent component, and of capsiate, a non-pungent component, from vanillylamine and vanillyl alcohol, respectively. Can transfer an acyl from 8-methylnon-6-enoyl-CoA to vanillylamine forming capsaicin and CoA. This Capsicum frutescens (Cayenne pepper) protein is Acyltransferase Pun1.